Consider the following 380-residue polypeptide: Erythronate-4-phosphate dehydrogenase (380 aa).

2 residues coordinate substrate: Ser-45 and Thr-66. Residues Asp-146, Thr-174, 205–207 (ASR), and Asp-231 each bind NAD(+). Arg-207 is a catalytic residue. Glu-236 is a catalytic residue. The active-site Proton donor is the His-253. Position 256 (Gly-256) interacts with NAD(+). Tyr-257 serves as a coordination point for substrate.

Belongs to the D-isomer specific 2-hydroxyacid dehydrogenase family. PdxB subfamily. Homodimer.

The protein resides in the cytoplasm. The catalysed reaction is 4-phospho-D-erythronate + NAD(+) = (R)-3-hydroxy-2-oxo-4-phosphooxybutanoate + NADH + H(+). It participates in cofactor biosynthesis; pyridoxine 5'-phosphate biosynthesis; pyridoxine 5'-phosphate from D-erythrose 4-phosphate: step 2/5. Its function is as follows. Catalyzes the oxidation of erythronate-4-phosphate to 3-hydroxy-2-oxo-4-phosphonooxybutanoate. This is Erythronate-4-phosphate dehydrogenase from Pseudomonas fluorescens (strain SBW25).